We begin with the raw amino-acid sequence, 196 residues long: Imidazoleglycerol-phosphate dehydratase (196 aa).

It belongs to the imidazoleglycerol-phosphate dehydratase family.

Its subcellular location is the cytoplasm. The catalysed reaction is D-erythro-1-(imidazol-4-yl)glycerol 3-phosphate = 3-(imidazol-4-yl)-2-oxopropyl phosphate + H2O. The protein operates within amino-acid biosynthesis; L-histidine biosynthesis; L-histidine from 5-phospho-alpha-D-ribose 1-diphosphate: step 6/9. The protein is Imidazoleglycerol-phosphate dehydratase of Desulfitobacterium hafniense (strain Y51).